The primary structure comprises 447 residues: Na(+)-translocating NADH-quinone reductase subunit A (447 aa).

This sequence belongs to the NqrA family. In terms of assembly, composed of six subunits; NqrA, NqrB, NqrC, NqrD, NqrE and NqrF.

It catalyses the reaction a ubiquinone + n Na(+)(in) + NADH + H(+) = a ubiquinol + n Na(+)(out) + NAD(+). Functionally, NQR complex catalyzes the reduction of ubiquinone-1 to ubiquinol by two successive reactions, coupled with the transport of Na(+) ions from the cytoplasm to the periplasm. NqrA to NqrE are probably involved in the second step, the conversion of ubisemiquinone to ubiquinol. The polypeptide is Na(+)-translocating NADH-quinone reductase subunit A (Haemophilus influenzae (strain PittGG)).